Consider the following 273-residue polypeptide: Shikimate dehydrogenase (NADP(+)) (273 aa).

Shikimate is bound by residues 14-16 (SKS) and Thr-61. Lys-65 (proton acceptor) is an active-site residue. Residues Asn-86 and Asp-102 each contribute to the shikimate site. NADP(+) is bound by residues 126–130 (GAGGA), 150–155 (NRTVAK), and Met-213. Position 215 (Tyr-215) interacts with shikimate. Gly-237 serves as a coordination point for NADP(+).

This sequence belongs to the shikimate dehydrogenase family. As to quaternary structure, homodimer.

It carries out the reaction shikimate + NADP(+) = 3-dehydroshikimate + NADPH + H(+). The protein operates within metabolic intermediate biosynthesis; chorismate biosynthesis; chorismate from D-erythrose 4-phosphate and phosphoenolpyruvate: step 4/7. Functionally, involved in the biosynthesis of the chorismate, which leads to the biosynthesis of aromatic amino acids. Catalyzes the reversible NADPH linked reduction of 3-dehydroshikimate (DHSA) to yield shikimate (SA). The polypeptide is Shikimate dehydrogenase (NADP(+)) (Tolumonas auensis (strain DSM 9187 / NBRC 110442 / TA 4)).